We begin with the raw amino-acid sequence, 108 residues long: Nucleoid-associated protein BMASAVP1_A1850 (108 aa).

Residues 84-108 (EATSQEKMSGMTSGLPLPPGFKLPF) are disordered. A compositionally biased stretch (polar residues) spans 85–95 (ATSQEKMSGMT). The segment covering 99-108 (PLPPGFKLPF) has biased composition (pro residues).

Belongs to the YbaB/EbfC family. In terms of assembly, homodimer.

Its subcellular location is the cytoplasm. It is found in the nucleoid. In terms of biological role, binds to DNA and alters its conformation. May be involved in regulation of gene expression, nucleoid organization and DNA protection. The protein is Nucleoid-associated protein BMASAVP1_A1850 of Burkholderia mallei (strain SAVP1).